The chain runs to 581 residues: Putative phospholipase B-like 3 (581 aa).

The N-terminal stretch at 1–16 is a signal peptide; the sequence is MKLLFFLFGLIFAVEQ. 9 N-linked (GlcNAc...) asparagine glycosylation sites follow: N50, N82, N132, N169, N215, N309, N543, N546, and N560.

The protein belongs to the phospholipase B-like family.

It localises to the secreted. In terms of biological role, putative phospholipase. The polypeptide is Putative phospholipase B-like 3 (Caenorhabditis elegans).